A 350-amino-acid polypeptide reads, in one-letter code: WUSCHEL-related homeobox 1 (350 aa).

The homeobox; WUS-type DNA-binding region spans 72–136 (MVSSRWNPTP…NHKARERQKR (65 aa)). The segment at 283-308 (TNTETCHRNGDDNKDQEQHEDCSNGE) is disordered.

It belongs to the WUS homeobox family.

Its subcellular location is the nucleus. In terms of biological role, transcription factor which may be involved in developmental processes. This is WUSCHEL-related homeobox 1 (WOX1) from Arabidopsis thaliana (Mouse-ear cress).